A 32-amino-acid chain; its full sequence is U6-ctenitoxin-Pr1a (32 aa).

Intrachain disulfides connect C3–C17, C10–C21, and C16–C30.

Expressed by the venom gland.

It localises to the secreted. In Phoneutria reidyi (Brazilian Amazonian armed spider), this protein is U6-ctenitoxin-Pr1a.